Consider the following 799-residue polypeptide: Elongation factor G, mitochondrial (799 aa).

The transit peptide at 1–33 (MRSPSLARLQTRAVFGLTRSARFQPQTLLRQRC) directs the protein to the mitochondrion. Residues 97 to 384 (DKCRNIGIAA…GVIDYLPNPA (288 aa)) enclose the tr-type G domain. Residues 106 to 113 (AHIDSGKT), 182 to 186 (DTPGH), and 236 to 239 (NKMD) each bind GTP.

The protein belongs to the TRAFAC class translation factor GTPase superfamily. Classic translation factor GTPase family. EF-G/EF-2 subfamily.

Its subcellular location is the mitochondrion. It functions in the pathway protein biosynthesis; polypeptide chain elongation. Its function is as follows. Mitochondrial GTPase that catalyzes the GTP-dependent ribosomal translocation step during translation elongation. During this step, the ribosome changes from the pre-translocational (PRE) to the post-translocational (POST) state as the newly formed A-site-bound peptidyl-tRNA and P-site-bound deacylated tRNA move to the P and E sites, respectively. Catalyzes the coordinated movement of the two tRNA molecules, the mRNA and conformational changes in the ribosome. The protein is Elongation factor G, mitochondrial (mef1) of Penicillium rubens (strain ATCC 28089 / DSM 1075 / NRRL 1951 / Wisconsin 54-1255) (Penicillium chrysogenum).